The primary structure comprises 81 residues: Small ribosomal subunit protein bS16 (81 aa).

Belongs to the bacterial ribosomal protein bS16 family.

This chain is Small ribosomal subunit protein bS16, found in Neisseria gonorrhoeae (strain ATCC 700825 / FA 1090).